A 249-amino-acid chain; its full sequence is tRNA (guanine-N(1)-)-methyltransferase (249 aa).

S-adenosyl-L-methionine-binding positions include G121 and 141–146 (LGDFVL).

This sequence belongs to the RNA methyltransferase TrmD family. As to quaternary structure, homodimer.

The protein resides in the cytoplasm. The enzyme catalyses guanosine(37) in tRNA + S-adenosyl-L-methionine = N(1)-methylguanosine(37) in tRNA + S-adenosyl-L-homocysteine + H(+). In terms of biological role, specifically methylates guanosine-37 in various tRNAs. This is tRNA (guanine-N(1)-)-methyltransferase from Cereibacter sphaeroides (strain ATCC 17023 / DSM 158 / JCM 6121 / CCUG 31486 / LMG 2827 / NBRC 12203 / NCIMB 8253 / ATH 2.4.1.) (Rhodobacter sphaeroides).